The primary structure comprises 862 residues: Leucine--tRNA ligase (862 aa).

The 'HIGH' region signature appears at Pro42–His52. The 'KMSKS' region motif lies at Lys614–Ser618. Lys617 is an ATP binding site.

It belongs to the class-I aminoacyl-tRNA synthetase family.

The protein localises to the cytoplasm. The enzyme catalyses tRNA(Leu) + L-leucine + ATP = L-leucyl-tRNA(Leu) + AMP + diphosphate. This Syntrophus aciditrophicus (strain SB) protein is Leucine--tRNA ligase.